The following is a 620-amino-acid chain: DNA primase (620 aa).

The CHC2-type zinc-finger motif lies at 38–62; that stretch reads CPFHADQNPSMTVSVAKNIFKCFSC. One can recognise a Toprim domain in the interval 266 to 350; sequence LKLYLVEGYF…IVEVVDWNQA (85 aa). Glu-272, Asp-319, and Asp-321 together coordinate Mg(2+).

This sequence belongs to the DnaG primase family. As to quaternary structure, monomer. Interacts with DnaB. Zn(2+) serves as cofactor. Requires Mg(2+) as cofactor.

The catalysed reaction is ssDNA + n NTP = ssDNA/pppN(pN)n-1 hybrid + (n-1) diphosphate.. RNA polymerase that catalyzes the synthesis of short RNA molecules used as primers for DNA polymerase during DNA replication. This chain is DNA primase, found in Mycoplasma pneumoniae (strain ATCC 29342 / M129 / Subtype 1) (Mycoplasmoides pneumoniae).